The sequence spans 651 residues: Acetyl-coenzyme A synthetase (651 aa).

CoA contacts are provided by residues 189–192 (RGGK), T311, and N335. ATP is bound by residues 387–389 (GEP), 411–416 (DTWWQT), D500, and R515. S523 provides a ligand contact to CoA. R526 lines the ATP pocket. Residues V537, H539, and V542 each coordinate Mg(2+). Position 584 (R584) interacts with CoA. K609 is modified (N6-acetyllysine).

This sequence belongs to the ATP-dependent AMP-binding enzyme family. Requires Mg(2+) as cofactor. Post-translationally, acetylated. Deacetylation by the SIR2-homolog deacetylase activates the enzyme.

It catalyses the reaction acetate + ATP + CoA = acetyl-CoA + AMP + diphosphate. In terms of biological role, catalyzes the conversion of acetate into acetyl-CoA (AcCoA), an essential intermediate at the junction of anabolic and catabolic pathways. AcsA undergoes a two-step reaction. In the first half reaction, AcsA combines acetate with ATP to form acetyl-adenylate (AcAMP) intermediate. In the second half reaction, it can then transfer the acetyl group from AcAMP to the sulfhydryl group of CoA, forming the product AcCoA. In Allorhizobium ampelinum (strain ATCC BAA-846 / DSM 112012 / S4) (Agrobacterium vitis (strain S4)), this protein is Acetyl-coenzyme A synthetase.